A 440-amino-acid polypeptide reads, in one-letter code: Gap junction gamma-2 protein (440 aa).

The Cytoplasmic portion of the chain corresponds to 1–21 (MTNMSWSFLTRLLEEIHNHST). A helical transmembrane segment spans residues 22 to 42 (FVGKVWLTVLVVFRIVLTAVG). Over 43-78 (GESIYSDEQSKFTCNTRQPGCDNVCYDAFAPLSHVR) the chain is Extracellular. A helical membrane pass occupies residues 79 to 99 (FWVFQIVVISTPSVMYLGYAV). The Cytoplasmic segment spans residues 100 to 223 (HRLARASEQE…AQLVVRAAFE (124 aa)). Residues 108–199 (QERRRALRRR…TPGPAGQHDG (92 aa)) are disordered. Over residues 112–124 (RALRRRPGTRRLP) the composition is skewed to basic residues. Over residues 136–149 (PDTTDLGEAEPILA) the composition is skewed to low complexity. A compositionally biased stretch (acidic residues) spans 150-173 (LEEDEDEEPGAPEGPGEDTEEERA). A helical membrane pass occupies residues 224 to 244 (VAFLVGQYLLYGFEVPPFFAC). Residues 245-264 (SRQPCPHVVDCFVSRPTEKT) are Extracellular-facing. Residues 265 to 285 (VFLLVMYVVSCLCLLLNLCEM) traverse the membrane as a helical segment. At 286–440 (AHLGLGSAQD…SRDGKATVWI (155 aa)) the chain is on the cytoplasmic side. The tract at residues 369–440 (DRDSPPCAGL…SRDGKATVWI (72 aa)) is disordered. Ser372 carries the phosphoserine modification. Low complexity predominate over residues 388 to 401 (VGGLASGTGSATSG).

It belongs to the connexin family. Gamma-type subfamily. A connexon is composed of a hexamer of connexins. Interacts with TJP1. Mainly expressed by oligodendrocytes in the central nervous system (at protein level).

Its subcellular location is the cell membrane. The protein localises to the cell junction. It localises to the gap junction. Its function is as follows. One gap junction consists of a cluster of closely packed pairs of transmembrane channels, the connexons, through which materials of low MW diffuse from one cell to a neighboring cell. May play a role in myelination in central and peripheral nervous systems. The protein is Gap junction gamma-2 protein (Gjc2) of Mus musculus (Mouse).